Here is a 215-residue protein sequence, read N- to C-terminus: LexA repressor (215 aa).

The H-T-H motif DNA-binding region spans 29-49 (VREICSAVGFKSTSTVHSYLQ). Residues S138 and K175 each act as for autocatalytic cleavage activity in the active site.

The protein belongs to the peptidase S24 family. As to quaternary structure, homodimer.

The catalysed reaction is Hydrolysis of Ala-|-Gly bond in repressor LexA.. Its function is as follows. Represses a number of genes involved in the response to DNA damage (SOS response), including recA and lexA. In the presence of single-stranded DNA, RecA interacts with LexA causing an autocatalytic cleavage which disrupts the DNA-binding part of LexA, leading to derepression of the SOS regulon and eventually DNA repair. The protein is LexA repressor of Ruminiclostridium cellulolyticum (strain ATCC 35319 / DSM 5812 / JCM 6584 / H10) (Clostridium cellulolyticum).